We begin with the raw amino-acid sequence, 426 residues long: Serine--tRNA ligase (426 aa).

L-serine is bound at residue 233–235 (TAE). 264 to 266 (RSE) serves as a coordination point for ATP. Glu287 is an L-serine binding site. 351-354 (EISS) serves as a coordination point for ATP. Residue Ser387 coordinates L-serine.

It belongs to the class-II aminoacyl-tRNA synthetase family. Type-1 seryl-tRNA synthetase subfamily. Homodimer. The tRNA molecule binds across the dimer.

It localises to the cytoplasm. It catalyses the reaction tRNA(Ser) + L-serine + ATP = L-seryl-tRNA(Ser) + AMP + diphosphate + H(+). It carries out the reaction tRNA(Sec) + L-serine + ATP = L-seryl-tRNA(Sec) + AMP + diphosphate + H(+). Its pathway is aminoacyl-tRNA biosynthesis; selenocysteinyl-tRNA(Sec) biosynthesis; L-seryl-tRNA(Sec) from L-serine and tRNA(Sec): step 1/1. Its function is as follows. Catalyzes the attachment of serine to tRNA(Ser). Is also able to aminoacylate tRNA(Sec) with serine, to form the misacylated tRNA L-seryl-tRNA(Sec), which will be further converted into selenocysteinyl-tRNA(Sec). The protein is Serine--tRNA ligase of Pseudomonas putida (strain W619).